The following is a 206-amino-acid chain: Large ribosomal subunit protein uL3 (206 aa).

The disordered stretch occupies residues 127 to 151; that stretch reads SGGPSSHGSKFHRHLGGTGQATTPA.

This sequence belongs to the universal ribosomal protein uL3 family. Part of the 50S ribosomal subunit. Forms a cluster with proteins L14 and L19.

Its function is as follows. One of the primary rRNA binding proteins, it binds directly near the 3'-end of the 23S rRNA, where it nucleates assembly of the 50S subunit. The polypeptide is Large ribosomal subunit protein uL3 (Borreliella burgdorferi (strain ATCC 35210 / DSM 4680 / CIP 102532 / B31) (Borrelia burgdorferi)).